The primary structure comprises 159 residues: NADH-quinone oxidoreductase subunit I (159 aa).

2 consecutive 4Fe-4S ferredoxin-type domains span residues 51-80 (RRYE…IEAD) and 90-119 (TRYD…EGPN). [4Fe-4S] cluster-binding residues include C60, C63, C66, C70, C99, C102, C105, and C109.

Belongs to the complex I 23 kDa subunit family. As to quaternary structure, NDH-1 is composed of 14 different subunits. Subunits NuoA, H, J, K, L, M, N constitute the membrane sector of the complex. It depends on [4Fe-4S] cluster as a cofactor.

The protein resides in the cell inner membrane. It carries out the reaction a quinone + NADH + 5 H(+)(in) = a quinol + NAD(+) + 4 H(+)(out). Functionally, NDH-1 shuttles electrons from NADH, via FMN and iron-sulfur (Fe-S) centers, to quinones in the respiratory chain. The immediate electron acceptor for the enzyme in this species is believed to be ubiquinone. Couples the redox reaction to proton translocation (for every two electrons transferred, four hydrogen ions are translocated across the cytoplasmic membrane), and thus conserves the redox energy in a proton gradient. In Rickettsia massiliae (strain Mtu5), this protein is NADH-quinone oxidoreductase subunit I.